Consider the following 421-residue polypeptide: Probable N-acetylgalactosaminyltransferase 8 (421 aa).

Residues 1-3 are Cytoplasmic-facing; it reads MRR. A helical; Signal-anchor for type II membrane protein transmembrane segment spans residues 4–24; sequence HVVLSIFVFAGIVFAAEEAEK. The Lumenal segment spans residues 25–421; sequence LPKCEHVDPY…ELEPKVHDEL (397 aa). 2 N-linked (GlcNAc...) asparagine glycosylation sites follow: asparagine 52 and asparagine 58. Cystine bridges form between cysteine 98–cysteine 331 and cysteine 322–cysteine 399. A catalytic subdomain A region spans residues 106–219; the sequence is SYSTSVVVIH…ERWLEPLLQP (114 aa). Substrate-binding residues include aspartate 147 and arginine 180. Residue aspartate 203 participates in Mn(2+) binding. Serine 204 lines the substrate pocket. A Mn(2+)-binding site is contributed by histidine 205. A catalytic subdomain B region spans residues 277 to 339; sequence PFNSPAMPGG…PCSRVGHVFR (63 aa). Position 308 (tryptophan 308) interacts with substrate. Residue histidine 336 coordinates Mn(2+). Arginine 339 and tyrosine 344 together coordinate substrate. The Prevents secretion from ER motif lies at 418 to 421; that stretch reads HDEL.

The protein belongs to the glycosyltransferase 2 family. GalNAc-T subfamily. Mn(2+) is required as a cofactor.

The protein localises to the golgi apparatus membrane. Its pathway is protein modification; protein glycosylation. In terms of biological role, potential glycopeptide transferase involved in O-linked oligosaccharide biosynthesis. In contrast to other members of the family, it does not act as a peptide transferase that transfers GalNAc onto serine or threonine residue on peptides that have been tested. Some peptide transferase activity is however not excluded, considering that its appropriate peptide substrate may remain unidentified. The polypeptide is Probable N-acetylgalactosaminyltransferase 8 (gly-8) (Caenorhabditis elegans).